Consider the following 473-residue polypeptide: Aspartyl/glutamyl-tRNA(Asn/Gln) amidotransferase subunit B (473 aa).

It belongs to the GatB/GatE family. GatB subfamily. In terms of assembly, heterotrimer of A, B and C subunits.

It carries out the reaction L-glutamyl-tRNA(Gln) + L-glutamine + ATP + H2O = L-glutaminyl-tRNA(Gln) + L-glutamate + ADP + phosphate + H(+). It catalyses the reaction L-aspartyl-tRNA(Asn) + L-glutamine + ATP + H2O = L-asparaginyl-tRNA(Asn) + L-glutamate + ADP + phosphate + 2 H(+). Functionally, allows the formation of correctly charged Asn-tRNA(Asn) or Gln-tRNA(Gln) through the transamidation of misacylated Asp-tRNA(Asn) or Glu-tRNA(Gln) in organisms which lack either or both of asparaginyl-tRNA or glutaminyl-tRNA synthetases. The reaction takes place in the presence of glutamine and ATP through an activated phospho-Asp-tRNA(Asn) or phospho-Glu-tRNA(Gln). This is Aspartyl/glutamyl-tRNA(Asn/Gln) amidotransferase subunit B from Wolbachia pipientis subsp. Culex pipiens (strain wPip).